We begin with the raw amino-acid sequence, 461 residues long: Glycerol-3-phosphate acyltransferase, chloroplastic (461 aa).

The transit peptide at 1 to 96 directs the protein to the chloroplast; that stretch reads MSMTGSSAYY…SPPNMSASVS (96 aa). The span at 47-76 shows a compositional bias: low complexity; it reads LLSSTSSSSSSSISLRSSTAPSPSCSSVTP. The disordered stretch occupies residues 47–88; that stretch reads LLSSTSSSSSSSISLRSSTAPSPSCSSVTPKDNCLASAKHSP. The short motif at 231–236 is the HXXXXD motif element; the sequence is HQTEAD.

It belongs to the GPAT/DAPAT family.

It localises to the plastid. The protein localises to the chloroplast stroma. The catalysed reaction is sn-glycerol 3-phosphate + an acyl-CoA = a 1-acyl-sn-glycero-3-phosphate + CoA. The protein operates within phospholipid metabolism; CDP-diacylglycerol biosynthesis; CDP-diacylglycerol from sn-glycerol 3-phosphate: step 1/3. Its function is as follows. Esterifies acyl-group from acyl-ACP to the sn-1 position of glycerol-3-phosphate. The enzyme from chilling-resistant plants discriminates against non-fluid palmitic acid and selects oleic acid whereas the enzyme from sensitive plants accepts both fatty acids. This is Glycerol-3-phosphate acyltransferase, chloroplastic (PLSB) from Phaseolus vulgaris (Kidney bean).